Reading from the N-terminus, the 101-residue chain is Small ribosomal subunit protein uS14 (101 aa).

The protein belongs to the universal ribosomal protein uS14 family. Part of the 30S ribosomal subunit. Contacts proteins S3 and S10.

Binds 16S rRNA, required for the assembly of 30S particles and may also be responsible for determining the conformation of the 16S rRNA at the A site. The chain is Small ribosomal subunit protein uS14 from Cupriavidus necator (strain ATCC 17699 / DSM 428 / KCTC 22496 / NCIMB 10442 / H16 / Stanier 337) (Ralstonia eutropha).